A 348-amino-acid chain; its full sequence is tRNA N6-adenosine threonylcarbamoyltransferase (348 aa).

Residues H115 and H119 each contribute to the Fe cation site. Substrate contacts are provided by residues 137 to 141, D170, G183, and N281; that span reads LASGG. Position 309 (D309) interacts with Fe cation.

It belongs to the KAE1 / TsaD family. The cofactor is Fe(2+).

The protein resides in the cytoplasm. The enzyme catalyses L-threonylcarbamoyladenylate + adenosine(37) in tRNA = N(6)-L-threonylcarbamoyladenosine(37) in tRNA + AMP + H(+). Functionally, required for the formation of a threonylcarbamoyl group on adenosine at position 37 (t(6)A37) in tRNAs that read codons beginning with adenine. Is involved in the transfer of the threonylcarbamoyl moiety of threonylcarbamoyl-AMP (TC-AMP) to the N6 group of A37, together with TsaE and TsaB. TsaD likely plays a direct catalytic role in this reaction. This Methylobacterium sp. (strain 4-46) protein is tRNA N6-adenosine threonylcarbamoyltransferase.